Reading from the N-terminus, the 919-residue chain is Coiled-coil domain-containing protein 66 (919 aa).

Disordered regions lie at residues 145–166, 456–505, 724–744, and 762–816; these read KEETSQDSLHLNNTSNQPKDEN, ERDR…RERE, ERNNPGHLSQNRGTSPVLPSP, and LKSD…EPSH. Residues 150–161 show a composition bias toward polar residues; that stretch reads QDSLHLNNTSNQ. Residues 467-558 are a coiled coil; sequence HQKAITAQVE…EQRIRELAQK (92 aa). The mediates localization to cilia, centrosomes and spindle microtubules and the interaction with PCM1, CEP290, CEP104 and CSPP1 stretch occupies residues 570 to 919; sequence GGYGLDDVSG…NQEENFNSSF (350 aa).

Homodimer; disulfide-linked. Interacts with CEP290. Interacts with PCM1. Interacts with ARMC9, TOGARAM1, CSPP1 and CEP104. Interacts with CDK5RAP2, CEP152, CEP192, TBG1 and PRC1. In terms of tissue distribution, expressed in retina and blood. Expressed in retina, mainly in photoreceptors but also in outer plexiform and ganglion cell layers (at protein level).

It is found in the cytoplasm. The protein localises to the cytoskeleton. It localises to the microtubule organizing center. The protein resides in the centrosome. Its subcellular location is the centriolar satellite. It is found in the cell projection. The protein localises to the cilium. It localises to the cilium basal body. The protein resides in the cilium axoneme. Its subcellular location is the photoreceptor inner segment. It is found in the photoreceptor outer segment. In terms of biological role, microtubule-binding protein required for ciliogenesis. May function in ciliogenesis by mediating the transport of proteins like BBS4 to the cilium, but also through the organization of the centriolar satellites. Required for the assembly of signaling-competent cilia with proper structure and length. Mediates this function in part by regulating transition zone assembly and basal body recruitment of the IFT-B complex. Cooperates with the ciliopathy proteins CSPP1 and CEP104 during cilium length regulation. Plays two important roles during cell division. First, is required for mitotic progression via regulation of spindle assembly, organization and orientation, levels of spindle microtubules (MTs), kinetochore-fiber integrity, and chromosome alignment. Second, functions during cytokinesis in part by regulating assembly and organization of central spindle and midbody MTs. Plays a role in retina morphogenesis and/or homeostasis. The polypeptide is Coiled-coil domain-containing protein 66 (CCDC66) (Canis lupus familiaris (Dog)).